The chain runs to 256 residues: Pimeloyl-[acyl-carrier protein] methyl ester esterase (256 aa).

Residues 15–242 (HLVLLHGWGL…AAHAPFISHP (228 aa)) enclose the AB hydrolase-1 domain. Residues Trp22, 82–83 (SL), and 143–147 (FLALQ) each bind substrate. Catalysis depends on Ser82, which acts as the Nucleophile. Residues Asp207 and His235 contribute to the active site. A substrate-binding site is contributed by His235.

This sequence belongs to the AB hydrolase superfamily. Carboxylesterase BioH family. In terms of assembly, monomer.

The protein resides in the cytoplasm. It carries out the reaction 6-carboxyhexanoyl-[ACP] methyl ester + H2O = 6-carboxyhexanoyl-[ACP] + methanol + H(+). The protein operates within cofactor biosynthesis; biotin biosynthesis. Its function is as follows. The physiological role of BioH is to remove the methyl group introduced by BioC when the pimeloyl moiety is complete. It allows to synthesize pimeloyl-ACP via the fatty acid synthetic pathway through the hydrolysis of the ester bonds of pimeloyl-ACP esters. The chain is Pimeloyl-[acyl-carrier protein] methyl ester esterase from Escherichia fergusonii (strain ATCC 35469 / DSM 13698 / CCUG 18766 / IAM 14443 / JCM 21226 / LMG 7866 / NBRC 102419 / NCTC 12128 / CDC 0568-73).